We begin with the raw amino-acid sequence, 253 residues long: Imidazole glycerol phosphate synthase subunit HisF (253 aa).

Active-site residues include Asp-11 and Asp-130.

The protein belongs to the HisA/HisF family. Heterodimer of HisH and HisF.

The protein localises to the cytoplasm. It catalyses the reaction 5-[(5-phospho-1-deoxy-D-ribulos-1-ylimino)methylamino]-1-(5-phospho-beta-D-ribosyl)imidazole-4-carboxamide + L-glutamine = D-erythro-1-(imidazol-4-yl)glycerol 3-phosphate + 5-amino-1-(5-phospho-beta-D-ribosyl)imidazole-4-carboxamide + L-glutamate + H(+). It functions in the pathway amino-acid biosynthesis; L-histidine biosynthesis; L-histidine from 5-phospho-alpha-D-ribose 1-diphosphate: step 5/9. Its function is as follows. IGPS catalyzes the conversion of PRFAR and glutamine to IGP, AICAR and glutamate. The HisF subunit catalyzes the cyclization activity that produces IGP and AICAR from PRFAR using the ammonia provided by the HisH subunit. In Thermotoga sp. (strain RQ2), this protein is Imidazole glycerol phosphate synthase subunit HisF.